The chain runs to 906 residues: Protein translocase subunit SecA (906 aa).

Residues Gln-86, 104–108, and Asp-511 each bind ATP; that span reads GEGKT. Composition is skewed to basic and acidic residues over residues 853–865 and 877–888; these read HESVIDNNQRHDE and VRREGPKVKRND. The tract at residues 853-906 is disordered; the sequence is HESVIDNNQRHDEDEQEEAPKVQQVRREGPKVKRNDPCPCGSGKKYKQCHGKVE. Residues Cys-890, Cys-892, Cys-901, and His-902 each contribute to the Zn(2+) site. A compositionally biased stretch (basic residues) spans 896–906; that stretch reads KKYKQCHGKVE.

It belongs to the SecA family. Monomer and homodimer. Part of the essential Sec protein translocation apparatus which comprises SecA, SecYEG and auxiliary proteins SecDF-YajC and YidC. Zn(2+) serves as cofactor.

It localises to the cell inner membrane. The protein resides in the cytoplasm. The catalysed reaction is ATP + H2O + cellular proteinSide 1 = ADP + phosphate + cellular proteinSide 2.. In terms of biological role, part of the Sec protein translocase complex. Interacts with the SecYEG preprotein conducting channel. Has a central role in coupling the hydrolysis of ATP to the transfer of proteins into and across the cell membrane, serving both as a receptor for the preprotein-SecB complex and as an ATP-driven molecular motor driving the stepwise translocation of polypeptide chains across the membrane. The chain is Protein translocase subunit SecA from Francisella tularensis subsp. holarctica (strain OSU18).